The following is a 917-amino-acid chain: DNA repair endonuclease XPF (917 aa).

The helicase-like stretch occupies residues 1–457 (MEPGLSGERR…EVWVNVRKGD (457 aa)). 2 leucine-zipper regions span residues 233–254 (LNACLKELKCHNPSLEVEDLSL) and 270–298 (LDPLWHQLGAKTKSLVQDLKILRTLLQYL). An N6-acetyllysine modification is found at K289. A compositionally biased stretch (basic and acidic residues) spans 454–479 (RKGDGPKRTTKSDKRPKAAPNKERAS). Disordered regions lie at residues 454–524 (RKGD…SSPE) and 643–681 (VPEEREGRDETNLDLARGSAALDAPTDTRKAGGQEQNGT). The Nuclear localization signal motif lies at 487 to 492 (KRKKQE). Over residues 507-516 (EDKALEEDLC) the composition is skewed to basic and acidic residues. S522 carries the phosphoserine modification. Basic and acidic residues predominate over residues 643–653 (VPEEREGRDET). The nuclease stretch occupies residues 659-814 (RGSAALDAPT…PSPHATAELF (156 aa)). One can recognise an ERCC4 domain in the interval 684-764 (SIVVDMREFR…RPVLLIEFDP (81 aa)). S765 carries the phosphoserine modification. The interval 838 to 906 (TLPESDRYNP…QLHDFLHTAY (69 aa)) is hhH2, dimerization with ERCC1. Position 912 is an N6-acetyllysine (K912).

This sequence belongs to the XPF family. Heterodimer composed of ERCC1 and ERCC4/XPF. Interacts with SLX4/BTBD12; this interaction is direct and links the ERCC1-ERCC4/XPF complex to SLX4, which may coordinate the action of the structure-specific endonuclease during DNA repair. The cofactor is Mg(2+). Acetylation at Lys-912 by KAT5 promotes interaction with ERCC1 by disrupting a salt bridge between Asp-908 and Lys-912, thereby exposing a second binding site for ERCC1. Deacetylated by SIRT1.

It localises to the nucleus. The protein localises to the chromosome. Its function is as follows. Catalytic component of a structure-specific DNA repair endonuclease responsible for the 5-prime incision during DNA repair, and which is essential for nucleotide excision repair (NER) and interstrand cross-link (ICL) repair. In Mus musculus (Mouse), this protein is DNA repair endonuclease XPF.